The following is a 223-amino-acid chain: Glucosyl-3-phosphoglycerate phosphatase (223 aa).

Arginine 10 contributes to the substrate binding site. Catalysis depends on histidine 11, which acts as the Tele-phosphohistidine intermediate. Residue lysine 47 forms an Isoglutamyl lysine isopeptide (Lys-Gln) (interchain with Q-Cter in protein Pup) linkage. Arginine 60 provides a ligand contact to substrate. The active-site Proton donor/acceptor is glutamate 84. Histidine 159 contributes to the substrate binding site.

The protein belongs to the phosphoglycerate mutase family. In terms of assembly, homodimer. Dimerization of the enzyme is essential for its dephosphorylation activity.

The enzyme catalyses (2R)-2-O-(alpha-D-glucopyranosyl)-3-phospho-glycerate + H2O = (2R)-2-O-(alpha-D-glucopyranosyl)-glycerate + phosphate. It carries out the reaction 2-O-(alpha-D-mannosyl)-3-phosphoglycerate + H2O = (2R)-2-O-(alpha-D-mannosyl)-glycerate + phosphate. It catalyses the reaction (2R)-2-O-[alpha-D-mannopyranosyl-(1-&gt;2)-alpha-D-glucopyranosyl]-3-phospho-glycerate + H2O = (2R)-2-O-[alpha-D-mannopyranosyl-(1-&gt;2)-alpha-D-glucopyranosyl]-glycerate + phosphate. With respect to regulation, progressively inhibited by cobalt ions at concentrations between 10-50 mM and by copper ions at any concentration between 1-50 mM. Its function is as follows. Involved in the biosynthesis of mycobacterial methylglucose lipopolysaccharides (MGLPs). Catalyzes the dephosphorylation of glucosyl-3-phosphoglycerate (GPG) to glucosylglycerate (GG). GPG is the preferred substrate, but GpgP also exhibits low dephosphorylation activity on mannosyl-3-phosphoglycerate (MPG) and mannosylglucosyl-3-phosphoglycerate (MGPG) in vitro. Shows only trace of phosphoglycerate mutase (PGM) activity. This chain is Glucosyl-3-phosphoglycerate phosphatase, found in Mycobacterium tuberculosis (strain ATCC 25618 / H37Rv).